A 232-amino-acid polypeptide reads, in one-letter code: 2,3,4,5-tetrahydropyridine-2,6-dicarboxylate N-acetyltransferase (232 aa).

The protein belongs to the transferase hexapeptide repeat family. DapH subfamily.

It carries out the reaction (S)-2,3,4,5-tetrahydrodipicolinate + acetyl-CoA + H2O = L-2-acetamido-6-oxoheptanedioate + CoA. The protein operates within amino-acid biosynthesis; L-lysine biosynthesis via DAP pathway; LL-2,6-diaminopimelate from (S)-tetrahydrodipicolinate (acetylase route): step 1/3. Its function is as follows. Catalyzes the transfer of an acetyl group from acetyl-CoA to tetrahydrodipicolinate. The polypeptide is 2,3,4,5-tetrahydropyridine-2,6-dicarboxylate N-acetyltransferase (Streptococcus mutans serotype c (strain ATCC 700610 / UA159)).